Reading from the N-terminus, the 395-residue chain is NAC domain-containing protein 7 (395 aa).

The NAC domain occupies 7–156 (VPPGFRFHPT…GWVVCRVFKK (150 aa)). A DNA-binding region spans residues 107 to 162 (IGMRKTLVFYKGRAPNGQKSDWIMHEYRLETDENGTPQEEGWVVCRVFKKRLAAVR). Composition is skewed to polar residues over residues 344–362 (AATASASIQNNAKDTSNAE) and 382–395 (TASTSSSCQIDLWK). Positions 344 to 395 (AATASASIQNNAKDTSNAEYQVDEEKDPKRASDMGEEYTASTSSSCQIDLWK) are disordered.

This sequence belongs to the plant vascular related NAC-domain protein family. In terms of assembly, interacts with NAC083/VNI2. In terms of tissue distribution, expressed in root, shoot and hypocotyl vascular elements, columella root caps, epidermal and cortex root cells and root-hypocotyl junctions. Observed predominantly in root imature xylem vessels. Present in root developing xylems. Specifically expressed in vessels in the secondary xylem of the root-hypocotyl region, and in vessels but not in interfascicular fibers in stems.

The protein localises to the nucleus. Its function is as follows. Transcription activator that binds to the secondary wall NAC binding element (SNBE), 5'-(T/A)NN(C/T)(T/C/G)TNNNNNNNA(A/C)GN(A/C/T)(A/T)-3', in the promoter of target genes. Involved in xylem formation by promoting the expression of secondary wall-associated transcription factors and of genes involved in secondary wall biosynthesis and programmed cell death, genes driven by the secondary wall NAC binding element (SNBE). Triggers thickening of secondary walls. The polypeptide is NAC domain-containing protein 7 (Arabidopsis thaliana (Mouse-ear cress)).